The following is a 302-amino-acid chain: 2-phosphoglycerate kinase (302 aa).

Residues 2–89 (IKVIERDGKV…FWRRFRKLKI (88 aa)) form the ATP-cone domain.

This sequence belongs to the 2-phosphoglycerate kinase family. A divalent metal cation is required as a cofactor.

It carries out the reaction (2R)-2-phosphoglycerate + ATP = (2R)-2,3-bisphosphoglycerate + ADP + H(+). The protein operates within thermoadapter biosynthesis; cyclic 2,3-diphosphoglycerate biosynthesis; cyclic 2,3-diphosphoglycerate from 2-phospho-D-glycerate: step 1/2. Functionally, catalyzes the phosphorylation of 2-phosphoglycerate to 2,3-diphosphoglycerate. Involved in the biosynthesis of cyclic 2,3-bisphosphoglycerate, a thermoprotectant. The chain is 2-phosphoglycerate kinase from Pyrococcus furiosus (strain ATCC 43587 / DSM 3638 / JCM 8422 / Vc1).